The primary structure comprises 1254 residues: SUN domain-containing ossification factor (1254 aa).

A signal peptide spans 1-29; the sequence is MKKHRRALALVSCLFLCSLVWLPSWRVCC. Disordered regions lie at residues 58 to 88, 118 to 270, and 282 to 304; these read KKDE…HKLK, EESS…DIPT, and EKEK…KKVQ. Residues 130–145 show a composition bias toward low complexity; that stretch reads VENISSSSTSEITPIS. Over residues 165 to 175 the composition is skewed to acidic residues; it reads EQSETDCDVGE. N202 and N236 each carry an N-linked (GlcNAc...) asparagine glycan. Positions 241–253 are enriched in basic and acidic residues; the sequence is LKNESSDYTKPGD. Residues 284-453 form the SUN domain; it reads EKSQSMHASS…SLIRVFGTSM (170 aa). Residues 288–297 are compositionally biased toward polar residues; that stretch reads SMHASSNGGS. A glycan (N-linked (GlcNAc...) asparagine) is linked at N524. Disordered stretches follow at residues 530 to 553, 583 to 605, and 759 to 788; these read NATA…PSPE, EEEE…EDES, and HIPS…SSIE. Low complexity predominate over residues 540–553; it reads PESTPVSTPVPSPE. A coiled-coil region spans residues 909–1009; that stretch reads NQKESVFMRL…VAELKREVSD (101 aa). N-linked (GlcNAc...) asparagine glycans are attached at residues N928 and N955. Residues 1011-1031 form a helical membrane-spanning segment; it reads QSYLVISLVLCVVLGLMLCMQ. S1081 carries the phosphoserine modification. Residues 1152–1172 form a disordered region; the sequence is EVYHSSYKGPPSEGSSETSSQ. A compositionally biased stretch (low complexity) spans 1163–1172; it reads SEGSSETSSQ.

O-glycosylated. O-mannosylated by POMT1 and POMT2 and elongated by POMGNT1. In terms of processing, N-glycosylated. As to expression, highly expressed in pancreas and testis and to a lower extent in prostate, ovary, heart, thymus, small intestine and spleen.

It localises to the rough endoplasmic reticulum membrane. Its function is as follows. Required for bone modeling during late embryogenesis. Regulates type I collagen synthesis in osteoblasts during their postnatal maturation. In Homo sapiens (Human), this protein is SUN domain-containing ossification factor (SUCO).